Reading from the N-terminus, the 170-residue chain is Ribosome maturation factor RimM (170 aa).

The region spanning 98 to 170 is the PRC barrel domain; sequence PDEYYWVDLE…RIVVDWDPEF (73 aa).

The protein belongs to the RimM family. In terms of assembly, binds ribosomal protein uS19.

The protein resides in the cytoplasm. An accessory protein needed during the final step in the assembly of 30S ribosomal subunit, possibly for assembly of the head region. Essential for efficient processing of 16S rRNA. May be needed both before and after RbfA during the maturation of 16S rRNA. It has affinity for free ribosomal 30S subunits but not for 70S ribosomes. In Xylella fastidiosa (strain 9a5c), this protein is Ribosome maturation factor RimM.